The following is a 303-amino-acid chain: Methionyl-tRNA formyltransferase (303 aa).

A (6S)-5,6,7,8-tetrahydrofolate-binding site is contributed by 108–111; sequence SDLP.

The protein belongs to the Fmt family.

The enzyme catalyses L-methionyl-tRNA(fMet) + (6R)-10-formyltetrahydrofolate = N-formyl-L-methionyl-tRNA(fMet) + (6S)-5,6,7,8-tetrahydrofolate + H(+). In terms of biological role, attaches a formyl group to the free amino group of methionyl-tRNA(fMet). The formyl group appears to play a dual role in the initiator identity of N-formylmethionyl-tRNA by promoting its recognition by IF2 and preventing the misappropriation of this tRNA by the elongation apparatus. This is Methionyl-tRNA formyltransferase from Rickettsia rickettsii (strain Iowa).